A 621-amino-acid chain; its full sequence is Phosphoenolpyruvate carboxykinase [GTP] (621 aa).

Substrate is bound by residues Arg-83 and 217–219 (YGG). Residues Lys-226 and His-245 each contribute to the Mn(2+) site. A substrate-binding site is contributed by Ser-267. GTP is bound at residue 268 to 273 (MCGKTS). Cys-269 is an active-site residue. Position 286 (Asp-286) interacts with Mn(2+). Residue 381 to 383 (NAR) coordinates substrate. Residues Arg-383 and Arg-415 each coordinate GTP.

It belongs to the phosphoenolpyruvate carboxykinase [GTP] family. Mn(2+) is required as a cofactor.

It is found in the cytoplasm. The enzyme catalyses oxaloacetate + GTP = phosphoenolpyruvate + GDP + CO2. It functions in the pathway carbohydrate biosynthesis; gluconeogenesis. In terms of biological role, catalyzes the conversion of oxaloacetate (OAA) to phosphoenolpyruvate (PEP), the rate-limiting step in the metabolic pathway that produces glucose from lactate and other precursors derived from the citric acid cycle. The protein is Phosphoenolpyruvate carboxykinase [GTP] of Pyrococcus horikoshii (strain ATCC 700860 / DSM 12428 / JCM 9974 / NBRC 100139 / OT-3).